The sequence spans 301 residues: Protoheme IX farnesyltransferase (301 aa).

9 helical membrane passes run 29-49 (VVAL…PGTV), 51-71 (LVPL…AAAF), 96-116 (ISII…FIIL), 123-143 (LTAW…TAYL), 151-171 (IVVG…AVTG), 177-197 (ALLL…ALAI), 223-243 (CIFL…LVGM), 244-264 (CGPV…YKAW), and 281-301 (FSIY…YLWV).

It belongs to the UbiA prenyltransferase family. Protoheme IX farnesyltransferase subfamily.

It localises to the cell inner membrane. The enzyme catalyses heme b + (2E,6E)-farnesyl diphosphate + H2O = Fe(II)-heme o + diphosphate. Its pathway is porphyrin-containing compound metabolism; heme O biosynthesis; heme O from protoheme: step 1/1. In terms of biological role, converts heme B (protoheme IX) to heme O by substitution of the vinyl group on carbon 2 of heme B porphyrin ring with a hydroxyethyl farnesyl side group. The chain is Protoheme IX farnesyltransferase from Shewanella pealeana (strain ATCC 700345 / ANG-SQ1).